The following is a 563-amino-acid chain: Glutamate--tRNA ligase (563 aa).

The interval 61–94 (PEEQQKEVESLGGLEQHTKKEEKPKGLPELKNTE) is disordered. Basic and acidic residues predominate over residues 76-94 (QHTKKEEKPKGLPELKNTE). A 'HIGH' region motif is present at residues 104–114 (PNPSGPLHIGH).

It belongs to the class-I aminoacyl-tRNA synthetase family. Glutamate--tRNA ligase type 2 subfamily.

It is found in the cytoplasm. It catalyses the reaction tRNA(Glu) + L-glutamate + ATP = L-glutamyl-tRNA(Glu) + AMP + diphosphate. Catalyzes the attachment of glutamate to tRNA(Glu) in a two-step reaction: glutamate is first activated by ATP to form Glu-AMP and then transferred to the acceptor end of tRNA(Glu). The polypeptide is Glutamate--tRNA ligase (Methanosphaera stadtmanae (strain ATCC 43021 / DSM 3091 / JCM 11832 / MCB-3)).